A 363-amino-acid polypeptide reads, in one-letter code: Carbamoyl phosphate synthase small chain (363 aa).

The CPSase stretch occupies residues methionine 1–arginine 171. Residues serine 39, glycine 219, and glycine 221 each contribute to the L-glutamine site. The region spanning arginine 171–serine 359 is the Glutamine amidotransferase type-1 domain. Residue cysteine 248 is the Nucleophile of the active site. Residues leucine 249, glutamine 252, asparagine 290, glycine 292, and tyrosine 293 each coordinate L-glutamine. Residues histidine 332 and glutamate 334 contribute to the active site.

This sequence belongs to the CarA family. Composed of two chains; the small (or glutamine) chain promotes the hydrolysis of glutamine to ammonia, which is used by the large (or ammonia) chain to synthesize carbamoyl phosphate. Tetramer of heterodimers (alpha,beta)4.

The catalysed reaction is hydrogencarbonate + L-glutamine + 2 ATP + H2O = carbamoyl phosphate + L-glutamate + 2 ADP + phosphate + 2 H(+). It catalyses the reaction L-glutamine + H2O = L-glutamate + NH4(+). Its pathway is amino-acid biosynthesis; L-arginine biosynthesis; carbamoyl phosphate from bicarbonate: step 1/1. It participates in pyrimidine metabolism; UMP biosynthesis via de novo pathway; (S)-dihydroorotate from bicarbonate: step 1/3. Functionally, small subunit of the glutamine-dependent carbamoyl phosphate synthetase (CPSase). CPSase catalyzes the formation of carbamoyl phosphate from the ammonia moiety of glutamine, carbonate, and phosphate donated by ATP, constituting the first step of 2 biosynthetic pathways, one leading to arginine and/or urea and the other to pyrimidine nucleotides. The small subunit (glutamine amidotransferase) binds and cleaves glutamine to supply the large subunit with the substrate ammonia. This is Carbamoyl phosphate synthase small chain from Symbiobacterium thermophilum (strain DSM 24528 / JCM 14929 / IAM 14863 / T).